A 419-amino-acid chain; its full sequence is UPF0329 protein ECU07_1890/ECU10_0010 (419 aa).

Positions 136–165 (RQRKREEETERSVKELVGDEEKAKSKEEKA) are enriched in basic and acidic residues. The tract at residues 136 to 222 (RQRKREEETE…KGGKKKSKGG (87 aa)) is disordered. A compositionally biased stretch (basic residues) spans 213-222 (KGGKKKSKGG).

Belongs to the UPF0329 family.

The chain is UPF0329 protein ECU07_1890/ECU10_0010 from Encephalitozoon cuniculi (strain GB-M1) (Microsporidian parasite).